Here is a 182-residue protein sequence, read N- to C-terminus: Large ribosomal subunit protein uL6 (182 aa).

It belongs to the universal ribosomal protein uL6 family. Part of the 50S ribosomal subunit.

Its function is as follows. This protein binds to the 23S rRNA, and is important in its secondary structure. It is located near the subunit interface in the base of the L7/L12 stalk, and near the tRNA binding site of the peptidyltransferase center. This Dehalococcoides mccartyi (strain CBDB1) protein is Large ribosomal subunit protein uL6.